The sequence spans 98 residues: Ferredoxin-like protein (98 aa).

It to ferredoxins from P.putida and C.tartarivorum, ferredoxin I from A.vinelandii, ferredoxin II from D.desulfuricans.

Functionally, could be a 3Fe-4S cluster-containing protein. This is Ferredoxin-like protein (fixX) from Rhizobium leguminosarum bv. trifolii.